Here is a 262-residue protein sequence, read N- to C-terminus: uncharacterized protein (262 aa).

The region spanning 6–70 is the S4 RNA-binding domain; sequence LRINQFLAHY…LKNKKFSVLV (65 aa). The active-site Nucleophile is the aspartate 108.

It belongs to the pseudouridine synthase RsuA family.

It catalyses the reaction a uridine in RNA = a pseudouridine in RNA. This is an uncharacterized protein from Helicobacter pylori (strain J99 / ATCC 700824) (Campylobacter pylori J99).